Consider the following 180-residue polypeptide: Cytokinin-beta-glucosidase (180 aa).

As to expression, accumulates in young leaves and shoot tips.

Its function is as follows. Hydrolyzes cytokinin glucosides thus liberating free cytokinins. The sequence is that of Cytokinin-beta-glucosidase (TROLC) from Nicotiana tabacum (Common tobacco).